Here is a 590-residue protein sequence, read N- to C-terminus: Aspartate--tRNA(Asp/Asn) ligase (590 aa).

Glutamate 170 is an L-aspartate binding site. Residues 194–197 form an aspartate region; that stretch reads QLFK. Arginine 216 lines the L-aspartate pocket. Residues 216–218 and glutamine 225 each bind ATP; that span reads RDE. Histidine 448 lines the L-aspartate pocket. Residue glutamate 482 coordinates ATP. Arginine 489 provides a ligand contact to L-aspartate. 534–537 lines the ATP pocket; it reads GWDR. The interval 559 to 590 is disordered; it reads GGVDPLTEAPAPITAQQRKESGIDAKPGKDGA. The span at 575–590 shows a compositional bias: basic and acidic residues; that stretch reads QRKESGIDAKPGKDGA.

The protein belongs to the class-II aminoacyl-tRNA synthetase family. Type 1 subfamily. As to quaternary structure, homodimer.

It localises to the cytoplasm. The enzyme catalyses tRNA(Asx) + L-aspartate + ATP = L-aspartyl-tRNA(Asx) + AMP + diphosphate. Aspartyl-tRNA synthetase with relaxed tRNA specificity since it is able to aspartylate not only its cognate tRNA(Asp) but also tRNA(Asn). Reaction proceeds in two steps: L-aspartate is first activated by ATP to form Asp-AMP and then transferred to the acceptor end of tRNA(Asp/Asn). The sequence is that of Aspartate--tRNA(Asp/Asn) ligase from Mycolicibacterium gilvum (strain PYR-GCK) (Mycobacterium gilvum (strain PYR-GCK)).